We begin with the raw amino-acid sequence, 32 residues long: Peptide II.10.10 (32 aa).

3 disulfide bridges follow: Cys5-Cys24, Cys10-Cys29, and Cys14-Cys31.

The protein belongs to the short scorpion toxin superfamily. Potassium channel inhibitor family. Alpha-KTx 10 subfamily. As to expression, expressed by the venom gland.

It localises to the secreted. The chain is Peptide II.10.10 from Centruroides tecomanus (Scorpion).